We begin with the raw amino-acid sequence, 177 residues long: NADH-quinone oxidoreductase subunit B (177 aa).

[4Fe-4S] cluster-binding residues include cysteine 56, cysteine 57, cysteine 121, and cysteine 151.

It belongs to the complex I 20 kDa subunit family. NDH-1 is composed of 14 different subunits. Subunits NuoB, C, D, E, F, and G constitute the peripheral sector of the complex. [4Fe-4S] cluster is required as a cofactor.

It localises to the cell inner membrane. The enzyme catalyses a quinone + NADH + 5 H(+)(in) = a quinol + NAD(+) + 4 H(+)(out). In terms of biological role, NDH-1 shuttles electrons from NADH, via FMN and iron-sulfur (Fe-S) centers, to quinones in the respiratory chain. Couples the redox reaction to proton translocation (for every two electrons transferred, four hydrogen ions are translocated across the cytoplasmic membrane), and thus conserves the redox energy in a proton gradient. The chain is NADH-quinone oxidoreductase subunit B from Roseobacter denitrificans (strain ATCC 33942 / OCh 114) (Erythrobacter sp. (strain OCh 114)).